The chain runs to 692 residues: Elongation factor G (692 aa).

Residues 8 to 282 form the tr-type G domain; it reads ENTRNIGIMA…AVIDYLPSPL (275 aa). Residues 17-24, 81-85, and 135-138 each bind GTP; these read AHIDAGKT, DTPGH, and NKMD.

Belongs to the TRAFAC class translation factor GTPase superfamily. Classic translation factor GTPase family. EF-G/EF-2 subfamily.

It is found in the cytoplasm. In terms of biological role, catalyzes the GTP-dependent ribosomal translocation step during translation elongation. During this step, the ribosome changes from the pre-translocational (PRE) to the post-translocational (POST) state as the newly formed A-site-bound peptidyl-tRNA and P-site-bound deacylated tRNA move to the P and E sites, respectively. Catalyzes the coordinated movement of the two tRNA molecules, the mRNA and conformational changes in the ribosome. The sequence is that of Elongation factor G from Bacillus cereus (strain ATCC 10987 / NRS 248).